Reading from the N-terminus, the 65-residue chain is Potassium channel toxin kappa-KTx 2.6 (65 aa).

An N-terminal signal peptide occupies residues 1 to 27 (MKTSKMICAFLLVLVVGTFNDISGAYG). The propeptide occupies 28–39 (EYVEDQHSFKIE). Intrachain disulfides connect Cys45-Cys63 and Cys49-Cys59.

Belongs to the short scorpion toxin superfamily. Potassium channel inhibitor kappa-KTx family. Kappa-KTx 2 subfamily. Expressed by the venom gland.

The protein localises to the secreted. In terms of biological role, potassium channel inhibitor (Kv). The polypeptide is Potassium channel toxin kappa-KTx 2.6 (Opisthacanthus cayaporum (South American scorpion)).